We begin with the raw amino-acid sequence, 166 residues long: Cytochrome c-type biogenesis protein CcmE (166 aa).

The Cytoplasmic segment spans residues 1 to 8 (MNAVRRKK). Residues 9-29 (LMWVMFTLAGAVIAVALVIYA) form a helical; Signal-anchor for type II membrane protein membrane-spanning segment. The Periplasmic segment spans residues 30-166 (IGKQTDYYFD…KLHETKTLQQ (137 aa)). The heme site is built by His124 and Tyr128. Positions 133–166 (VAKSMKENNRSGAVPSSEQYNPAEKLHETKTLQQ) are disordered. Polar residues predominate over residues 142-152 (RSGAVPSSEQY). Basic and acidic residues predominate over residues 156-166 (EKLHETKTLQQ).

It belongs to the CcmE/CycJ family.

Its subcellular location is the cell inner membrane. Heme chaperone required for the biogenesis of c-type cytochromes. Transiently binds heme delivered by CcmC and transfers the heme to apo-cytochromes in a process facilitated by CcmF and CcmH. The sequence is that of Cytochrome c-type biogenesis protein CcmE from Psychrobacter arcticus (strain DSM 17307 / VKM B-2377 / 273-4).